The primary structure comprises 283 residues: Pantothenate synthetase (283 aa).

30-37 lines the ATP pocket; it reads MGNLHDGH. H37 serves as the catalytic Proton donor. Position 61 (Q61) interacts with (R)-pantoate. Q61 contributes to the beta-alanine binding site. 149 to 152 is an ATP binding site; sequence GEKD. Residue Q155 participates in (R)-pantoate binding. Residue 186–189 coordinates ATP; it reads LSSR.

The protein belongs to the pantothenate synthetase family. As to quaternary structure, homodimer.

Its subcellular location is the cytoplasm. It carries out the reaction (R)-pantoate + beta-alanine + ATP = (R)-pantothenate + AMP + diphosphate + H(+). The protein operates within cofactor biosynthesis; (R)-pantothenate biosynthesis; (R)-pantothenate from (R)-pantoate and beta-alanine: step 1/1. Catalyzes the condensation of pantoate with beta-alanine in an ATP-dependent reaction via a pantoyl-adenylate intermediate. The sequence is that of Pantothenate synthetase from Escherichia coli (strain SMS-3-5 / SECEC).